A 408-amino-acid chain; its full sequence is MSPSESDDAINWKRNLIVAWLGCFLTGAAFSLVMPFLPLYVEELGVTGHSALNLWSGIVFSITFLFSAIASPFWGGLADRKGRKIMLLRSALGMGIVMILMGMAQNIWQFLILRALLGLLGGFVPNANALIATQVPRNKSGWALGTLSTGGVSGALLGPLAGGLLADHYGLRPVFFITASVLMLCFVVTLLCIKEKFQPVSKKEMLHVREVVFSLKNPRLVLSLFVTTMIIQIASGSIAPILTLYVRELAGNVGNIAFISGMIASVPGVAALLSAPRLGKLGDRIGPDKILIAALIFSVLLLIPMSFVQTPWQLGILRFLLGAADGALLPAVQTLLVYNSSNQIAGRIFSYNQSFRDIGNVTGPLMGAAISANYGFRAVFLVTACVVLFNIIYSWNSLRRRREPQVLG.

11 consecutive transmembrane segments (helical) span residues 16–36 (LIVAWLGCFLTGAAFSLVMPF), 58–78 (IVFSITFLFSAIASPFWGGLA), 92–112 (LGMGIVMILMGMAQNIWQFLI), 115–135 (ALLGLLGGFVPNANALIATQV), 146–166 (TLSTGGVSGALLGPLAGGLLA), 173–193 (PVFFITASVLMLCFVVTLLCI), 224–244 (LFVTTMIIQIASGSIAPILTL), 253–273 (VGNIAFISGMIASVPGVAALL), 290–310 (ILIAALIFSVLLLIPMSFVQT), 319–339 (FLLGAADGALLPAVQTLLVYN), and 378–398 (AVFLVTACVVLFNIIYSWNSL).

The protein belongs to the major facilitator superfamily. DHA1 family. MdtG (TC 2.A.1.2.20) subfamily.

The protein resides in the cell inner membrane. Functionally, confers resistance to fosfomycin and deoxycholate. The chain is Multidrug resistance protein MdtG from Escherichia fergusonii (strain ATCC 35469 / DSM 13698 / CCUG 18766 / IAM 14443 / JCM 21226 / LMG 7866 / NBRC 102419 / NCTC 12128 / CDC 0568-73).